A 345-amino-acid chain; its full sequence is Phosphoribosylformylglycinamidine cyclo-ligase (345 aa).

Belongs to the AIR synthase family.

It localises to the cytoplasm. It carries out the reaction 2-formamido-N(1)-(5-O-phospho-beta-D-ribosyl)acetamidine + ATP = 5-amino-1-(5-phospho-beta-D-ribosyl)imidazole + ADP + phosphate + H(+). The protein operates within purine metabolism; IMP biosynthesis via de novo pathway; 5-amino-1-(5-phospho-D-ribosyl)imidazole from N(2)-formyl-N(1)-(5-phospho-D-ribosyl)glycinamide: step 2/2. The chain is Phosphoribosylformylglycinamidine cyclo-ligase from Bifidobacterium longum (strain DJO10A).